A 94-amino-acid polypeptide reads, in one-letter code: uncharacterized protein (94 aa).

This is an uncharacterized protein from Saccharolobus islandicus (Sulfolobus islandicus).